The sequence spans 563 residues: Rab escort protein 1 (563 aa).

Residues 538 to 563 (ELFKEETSPAENTTEEENDGGVEIED) are disordered. Residues 550–563 (TTEEENDGGVEIED) show a composition bias toward acidic residues.

This sequence belongs to the Rab GDI family. Heterotrimer composed of the alpha subunit RGTA, the beta subunit RGTB and REP; within this trimer, RGTA and RGTB form the catalytic component, while REP mediates peptide substrate binding. Expressed in roots, leaves and flowers.

It localises to the cytoplasm. In terms of biological role, substrate-binding subunit of the Rab geranylgeranyltransferase (GGTase) complex. Binds unprenylated Rab proteins and presents the substrate peptide to the catalytic component composed of the alpha subunit RGTA and the beta subunit RGTB. Preferentially binds the GDP-bound form of Rab and stimulates geranylgeranylation of various Rab GTPases in vitro. This chain is Rab escort protein 1, found in Arabidopsis thaliana (Mouse-ear cress).